A 398-amino-acid chain; its full sequence is Autophagy-related protein 39 (398 aa).

The short motif at 8-11 (WNLV) is the ATG8-binding element. Residues 15–50 (RLRKGREGEEQSSKSEISLDSLHESSFAGEDDEDFD) are disordered. An ATG11-binding motif is present at residues 52 to 59 (DVLSNTSS). The helical transmembrane segment at 148 to 164 (VIMLSSLLSMTFSYLAL) threads the bilayer.

Interacts with ATG8 and ATG11.

It is found in the endoplasmic reticulum membrane. It localises to the preautophagosomal structure membrane. Its function is as follows. Acts as a receptor for reticulophagy and nucleophagy. Directs autophagic sequestration of double-membrane vesicles derived from the nuclear envelope and perinuclear endoplasmic reticulum (pnER) into autophagosomes. Is not required for the cytoplasm-to-vacuole targeting pathway, mitophagy, pexophagy, and non-selective autophagy. This chain is Autophagy-related protein 39, found in Saccharomyces cerevisiae (strain ATCC 204508 / S288c) (Baker's yeast).